Reading from the N-terminus, the 99-residue chain is Seminal vesicle secretory protein 6 (99 aa).

A signal peptide spans Met-1–Ala-21.

It belongs to the SVP2/SVP5/SVP6 family. In terms of tissue distribution, testis.

Its subcellular location is the secreted. It is found in the extracellular space. The sequence is that of Seminal vesicle secretory protein 6 (Svs6) from Mus musculus (Mouse).